The sequence spans 787 residues: Serine proteinase stubble (787 aa).

A disordered region spans residues 1 to 22; sequence MKQPTLIRPRLRHRRSTPAAAT. The Cytoplasmic portion of the chain corresponds to 1–58; sequence MKQPTLIRPRLRHRRSTPAAATKMCPKRHWLVNNRAAGSRGSGGAAARSRRSLDQIVE. The chain crosses the membrane as a helical; Signal-anchor for type II membrane protein span at residues 59–80; it reads VLVALIVVNCLATAAAALITPP. Residues 81 to 787 are Extracellular-facing; that stretch reads DSLESLGSLG…FTPWILEHVR (707 aa). A glycan (N-linked (GlcNAc...) asparagine) is linked at Asn-177. The disordered stretch occupies residues 225–516; it reads AGTLVIRPSG…EISDSSIPDA (292 aa). 5 stretches are compositionally biased toward low complexity: residues 262–280, 287–303, 358–368, 393–438, and 449–485; these read SASH…NPNS, QQQQ…NHWQ, PSTSTSTTSTS, SLAA…RTTT, and TTAT…VTSS. A compositionally biased stretch (polar residues) spans 502 to 512; that stretch reads GIETNEISDSS. 2 cysteine pairs are disulfide-bonded: Cys-532–Cys-660 and Cys-575–Cys-591. Residues 544 to 787 enclose the Peptidase S1 domain; that stretch reads IVGGKSAAFG…FTPWILEHVR (244 aa). Active-site charge relay system residues include His-590 and Asp-640. Residue Asn-672 is glycosylated (N-linked (GlcNAc...) asparagine). 2 cysteine pairs are disulfide-bonded: Cys-704-Cys-723 and Cys-734-Cys-763. Ser-738 acts as the Charge relay system in catalysis.

Belongs to the peptidase S1 family. May activate itself by proteolytic cleavage.

The protein localises to the membrane. Its function is as follows. Hormone dependent protease required for epithelial morphogenesis, including the formation of bristles, legs, and wings. Has a dual function, detaches imaginal disk cells from extracellular matrices through its extracellular proteolytic domain and transmits an outside-to-inside signal to its intracellular domain to modify the cytoskeleton during morphogenesis. In Drosophila melanogaster (Fruit fly), this protein is Serine proteinase stubble (Sb).